The sequence spans 100 residues: NADH-quinone oxidoreductase subunit K (100 aa).

3 helical membrane-spanning segments follow: residues 4-24 (LQHG…GLLI), 28-48 (LLFM…AFVV), and 60-80 (VMYI…LALL).

Belongs to the complex I subunit 4L family. NDH-1 is composed of 13 different subunits. Subunits NuoA, H, J, K, L, M, N constitute the membrane sector of the complex.

It localises to the cell inner membrane. It catalyses the reaction a quinone + NADH + 5 H(+)(in) = a quinol + NAD(+) + 4 H(+)(out). Its function is as follows. NDH-1 shuttles electrons from NADH, via FMN and iron-sulfur (Fe-S) centers, to quinones in the respiratory chain. The immediate electron acceptor for the enzyme in this species is believed to be ubiquinone. Couples the redox reaction to proton translocation (for every two electrons transferred, four hydrogen ions are translocated across the cytoplasmic membrane), and thus conserves the redox energy in a proton gradient. The protein is NADH-quinone oxidoreductase subunit K of Pectobacterium carotovorum subsp. carotovorum (strain PC1).